Consider the following 533-residue polypeptide: Probable bifunctional tRNA threonylcarbamoyladenosine biosynthesis protein (533 aa).

Residues 1–328 (MRILGIEGTA…FRPDAVTVTW (328 aa)) are kae1. Fe cation contacts are provided by His-112 and His-116. Residues 133–137 (NASGA), Asp-165, Gly-178, Glu-182, and Asn-261 contribute to the L-threonylcarbamoyladenylate site. Asp-289 lines the Fe cation pocket. In terms of domain architecture, Protein kinase spans 339–533 (PATLDKTPVR…RDIESRGRYH (195 aa)). Residues 347-354 (VRGAEAIV) and Lys-363 contribute to the ATP site. Asp-452 serves as the catalytic Proton acceptor; for kinase activity.

It in the N-terminal section; belongs to the KAE1 / TsaD family. This sequence in the C-terminal section; belongs to the protein kinase superfamily. Tyr protein kinase family. BUD32 subfamily. In terms of assembly, component of the KEOPS complex that consists of Kae1, Bud32, Cgi121 and Pcc1; the whole complex dimerizes. Fe(2+) serves as cofactor.

The protein localises to the cytoplasm. The enzyme catalyses L-seryl-[protein] + ATP = O-phospho-L-seryl-[protein] + ADP + H(+). It catalyses the reaction L-threonyl-[protein] + ATP = O-phospho-L-threonyl-[protein] + ADP + H(+). The catalysed reaction is L-threonylcarbamoyladenylate + adenosine(37) in tRNA = N(6)-L-threonylcarbamoyladenosine(37) in tRNA + AMP + H(+). Its function is as follows. Required for the formation of a threonylcarbamoyl group on adenosine at position 37 (t(6)A37) in tRNAs that read codons beginning with adenine. Is a component of the KEOPS complex that is probably involved in the transfer of the threonylcarbamoyl moiety of threonylcarbamoyl-AMP (TC-AMP) to the N6 group of A37. The Kae1 domain likely plays a direct catalytic role in this reaction. The Bud32 domain probably displays kinase activity that regulates Kae1 function. The chain is Probable bifunctional tRNA threonylcarbamoyladenosine biosynthesis protein from Haloquadratum walsbyi (strain DSM 16790 / HBSQ001).